A 446-amino-acid polypeptide reads, in one-letter code: Chromosomal replication initiator protein DnaA (446 aa).

The segment at 1–81 is domain I, interacts with DnaA modulators; that stretch reads MENISDLWNS…AKLAIRFIIP (81 aa). Residues 81–109 are domain II; that stretch reads PQSQAEEDIDLPPVKPNPAQDDSAHLPQS. A domain III, AAA+ region region spans residues 110-326; the sequence is MLNPKYTFDT…GALIRVVAYS (217 aa). 4 residues coordinate ATP: G154, G156, K157, and T158. A domain IV, binds dsDNA region spans residues 327 to 446; the sequence is SLINKDINAD…QVEEINGILK (120 aa).

It belongs to the DnaA family. Oligomerizes as a right-handed, spiral filament on DNA at oriC.

It localises to the cytoplasm. Plays an essential role in the initiation and regulation of chromosomal replication. ATP-DnaA binds to the origin of replication (oriC) to initiate formation of the DNA replication initiation complex once per cell cycle. Binds the DnaA box (a 9 base pair repeat at the origin) and separates the double-stranded (ds)DNA. Forms a right-handed helical filament on oriC DNA; dsDNA binds to the exterior of the filament while single-stranded (ss)DNA is stabiized in the filament's interior. The ATP-DnaA-oriC complex binds and stabilizes one strand of the AT-rich DNA unwinding element (DUE), permitting loading of DNA polymerase. After initiation quickly degrades to an ADP-DnaA complex that is not apt for DNA replication. Binds acidic phospholipids. This is Chromosomal replication initiator protein DnaA from Bacillus cereus (strain B4264).